A 486-amino-acid chain; its full sequence is Glutamate--tRNA ligase (486 aa).

Positions 12-22 (PSPTGTPHVGL) match the 'HIGH' region motif. A 'KMSKS' region motif is present at residues 256 to 260 (KLSKR). Lys259 is an ATP binding site.

It belongs to the class-I aminoacyl-tRNA synthetase family. Glutamate--tRNA ligase type 1 subfamily. As to quaternary structure, monomer.

The protein resides in the cytoplasm. The enzyme catalyses tRNA(Glu) + L-glutamate + ATP = L-glutamyl-tRNA(Glu) + AMP + diphosphate. Functionally, catalyzes the attachment of glutamate to tRNA(Glu) in a two-step reaction: glutamate is first activated by ATP to form Glu-AMP and then transferred to the acceptor end of tRNA(Glu). The sequence is that of Glutamate--tRNA ligase from Mycolicibacterium smegmatis (strain ATCC 700084 / mc(2)155) (Mycobacterium smegmatis).